Reading from the N-terminus, the 98-residue chain is YcgL domain-containing protein Ping_1076 (98 aa).

The region spanning methionine 1–lysine 85 is the YcgL domain. The segment at proline 75 to isoleucine 98 is disordered.

The sequence is that of YcgL domain-containing protein Ping_1076 from Psychromonas ingrahamii (strain DSM 17664 / CCUG 51855 / 37).